A 235-amino-acid chain; its full sequence is Ubiquinone biosynthesis O-methyltransferase (235 aa).

Positions 39, 59, 80, and 124 each coordinate S-adenosyl-L-methionine.

Belongs to the methyltransferase superfamily. UbiG/COQ3 family.

It catalyses the reaction a 3-demethylubiquinol + S-adenosyl-L-methionine = a ubiquinol + S-adenosyl-L-homocysteine + H(+). It carries out the reaction a 3-(all-trans-polyprenyl)benzene-1,2-diol + S-adenosyl-L-methionine = a 2-methoxy-6-(all-trans-polyprenyl)phenol + S-adenosyl-L-homocysteine + H(+). It participates in cofactor biosynthesis; ubiquinone biosynthesis. In terms of biological role, O-methyltransferase that catalyzes the 2 O-methylation steps in the ubiquinone biosynthetic pathway. This Vibrio campbellii (strain ATCC BAA-1116) protein is Ubiquinone biosynthesis O-methyltransferase.